The chain runs to 177 residues: Large ribosomal subunit protein uL6 (177 aa).

Belongs to the universal ribosomal protein uL6 family. Part of the 50S ribosomal subunit.

Functionally, this protein binds to the 23S rRNA, and is important in its secondary structure. It is located near the subunit interface in the base of the L7/L12 stalk, and near the tRNA binding site of the peptidyltransferase center. The sequence is that of Large ribosomal subunit protein uL6 from Nitrobacter winogradskyi (strain ATCC 25391 / DSM 10237 / CIP 104748 / NCIMB 11846 / Nb-255).